The sequence spans 207 residues: uncharacterized protein (207 aa).

Its subcellular location is the mitochondrion. This is an uncharacterized protein from Marchantia polymorpha (Common liverwort).